A 313-amino-acid chain; its full sequence is Porphobilinogen deaminase (313 aa).

An S-(dipyrrolylmethanemethyl)cysteine modification is found at Cys-242.

This sequence belongs to the HMBS family. As to quaternary structure, monomer. Requires dipyrromethane as cofactor.

It catalyses the reaction 4 porphobilinogen + H2O = hydroxymethylbilane + 4 NH4(+). Its pathway is porphyrin-containing compound metabolism; protoporphyrin-IX biosynthesis; coproporphyrinogen-III from 5-aminolevulinate: step 2/4. In terms of biological role, tetrapolymerization of the monopyrrole PBG into the hydroxymethylbilane pre-uroporphyrinogen in several discrete steps. The protein is Porphobilinogen deaminase of Pectobacterium atrosepticum (strain SCRI 1043 / ATCC BAA-672) (Erwinia carotovora subsp. atroseptica).